Reading from the N-terminus, the 496-residue chain is Glutamate--cysteine ligase B, chloroplastic (496 aa).

The transit peptide at 1–34 directs the protein to the chloroplast; the sequence is MAVASRLAVARVAPDGGAAGRRRRRRGRPVVAVP. The segment at 14–53 is disordered; the sequence is PDGGAAGRRRRRRGRPVVAVPTAAGRGRGRGGAVAASPPT. Positions 29 to 38 are enriched in low complexity; that stretch reads PVVAVPTAAG. Cysteines 160 and 380 form a disulfide.

Belongs to the carboxylate-amine ligase family. Glutamate--cysteine ligase type 2 subfamily. Homodimer or monomer when oxidized or reduced, respectively. In terms of processing, the Cys-160-Cys-380 disulfide bridge is known to modulate the enzyme activity according to the redox status. The oxidized form constitutes the active enzyme.

Its subcellular location is the plastid. It is found in the chloroplast. The catalysed reaction is L-cysteine + L-glutamate + ATP = gamma-L-glutamyl-L-cysteine + ADP + phosphate + H(+). It participates in sulfur metabolism; glutathione biosynthesis; glutathione from L-cysteine and L-glutamate: step 1/2. The protein is Glutamate--cysteine ligase B, chloroplastic (GSH1-2) of Oryza sativa subsp. japonica (Rice).